We begin with the raw amino-acid sequence, 436 residues long: Elongation factor 1-alpha (436 aa).

The region spanning 8–232 (KPHLNMIVTG…DDFKMAEKPV (225 aa)) is the tr-type G domain. The interval 17 to 24 (GHIDNGKS) is G1. 17–24 (GHIDNGKS) serves as a coordination point for GTP. Residue Ser24 participates in Mg(2+) binding. The interval 74-78 (GITID) is G2. The segment at 95-98 (DAPG) is G3. Residues 95–99 (DAPGH) and 157–160 (NKMD) each bind GTP. Residues 157–160 (NKMD) are G4. The tract at residues 196–198 (SGW) is G5.

The protein belongs to the TRAFAC class translation factor GTPase superfamily. Classic translation factor GTPase family. EF-Tu/EF-1A subfamily.

The protein resides in the cytoplasm. It catalyses the reaction GTP + H2O = GDP + phosphate + H(+). Functionally, GTP hydrolase that promotes the GTP-dependent binding of aminoacyl-tRNA to the A-site of ribosomes during protein biosynthesis. In Cenarchaeum symbiosum (strain A), this protein is Elongation factor 1-alpha.